The chain runs to 206 residues: Ribosomal RNA small subunit methyltransferase G (206 aa).

S-adenosyl-L-methionine-binding positions include glycine 71, phenylalanine 76, 122–123 (AE), and arginine 135.

The protein belongs to the methyltransferase superfamily. RNA methyltransferase RsmG family.

It localises to the cytoplasm. Its function is as follows. Specifically methylates the N7 position of a guanine in 16S rRNA. This Bacteroides fragilis (strain ATCC 25285 / DSM 2151 / CCUG 4856 / JCM 11019 / LMG 10263 / NCTC 9343 / Onslow / VPI 2553 / EN-2) protein is Ribosomal RNA small subunit methyltransferase G.